Consider the following 595-residue polypeptide: MATKARVMYDFAAEPGNNELTVTEGEIITVTNPNVGGGWLEGKNNKGEQGLVPTDYVEILPNDGKDPFSCGNSVADQAFLDSLTASTAQTNSSSANSNNQVGGGNDPWTAWNAPKPGNWDSSDAWGSRTDGTSAQRNSSANNWDTGFGHPQAYQGPATGDDDEWDEDWDDPKSSSPYFKDSEPAEAGGIQRGNSRAGASSMKLPLNKFPGFAKPGMEQYLLAKQLAKPKEKIAIIVGDYGPMWVYPTSTFDCVVADPRKGSKMYGLKSYIEYQLTPTNTNRSVNHRYKHFDWLYERLLVKFGSAIPIPSLPDKQVTGRFEEEFIKMRMERLQAWMTRMCRHPVVSESEVFQQFLNFRDEKEWKTGKRKAEKDELVGVMIFSTMEPEAPDLDLIEIEQKCDAVGKFTKAMDDGVKELLTVGQEHWKRCTGPLPKEYQKIGKALQSLAAVFSSSGYQGETDLNDAITEAGKTYEEIASLVAEQPKKDLHFLMECNHEYKGFLGCFPDIIGAHKGAIEKVKESDKLVATSKITPQDKQTMVKRVGTMSYALQAEMNHFHSNRIYDYNSVIRLYLEQQVQFYETIAEKLRQALSRFPVM.

One can recognise an SH3 domain in the interval 1–62; the sequence is MATKARVMYD…PTDYVEILPN (62 aa). A compositionally biased stretch (low complexity) spans 89-100; the sequence is QTNSSSANSNNQ. The tract at residues 89–199 is disordered; sequence QTNSSSANSN…QRGNSRAGAS (111 aa). A Phosphoserine modification is found at serine 121. The span at 129-144 shows a compositional bias: polar residues; that stretch reads TDGTSAQRNSSANNWD. Positions 159–169 are enriched in acidic residues; it reads GDDDEWDEDWD. Residue serine 200 is modified to Phosphoserine. Positions 201 to 213 are critical for tubulation activity; that stretch reads MKLPLNKFPGFAK. Phosphotyrosine is present on tyrosine 239. The PX domain maps to 250–360; sequence FDCVVADPRK…QQFLNFRDEK (111 aa). Residues arginine 286, lysine 288, and arginine 327 each coordinate a 1,2-diacyl-sn-glycero-3-phospho-(1D-myo-inositol-4,5-bisphosphate). Lysine 288 carries the post-translational modification N6-acetyllysine. In terms of domain architecture, BAR spans 392–595; that stretch reads LIEIEQKCDA…RQALSRFPVM (204 aa).

It belongs to the sorting nexin family. Homodimer, and homooligomer. Heterodimer with SNX18. Interacts with ITCH. Interacts (via SH3 domain) with TNK2, WASL and ACTR3. Identified in a complex with TNK2 and clathrin heavy chains. Identified in a complex with the AP-2 complex, clathrin and DNM2. Interacts (via SH3 domain) with DNM1 and DNM2. Identified in an oligomeric complex containing DNM1 and SNX9. Interacts with FCHSD1. Interacts with ADAM9 and ADAM15 cytoplasmic tails. In terms of processing, phosphorylated on tyrosine residues by TNK2. Phosphorylation promotes its activity in the degradation of EGFR. Post-translationally, ubiquitinated by ITCH. In terms of tissue distribution, detected in inner ear vestibula and in the cuticular plate of cochlear hair cells (at protein level).

It localises to the cytoplasmic vesicle membrane. It is found in the cell membrane. The protein resides in the cytoplasmic vesicle. The protein localises to the clathrin-coated vesicle. Its subcellular location is the golgi apparatus. It localises to the trans-Golgi network. It is found in the cell projection. The protein resides in the ruffle. The protein localises to the cytoplasm. Its function is as follows. Involved in endocytosis and intracellular vesicle trafficking, both during interphase and at the end of mitosis. Required for efficient progress through mitosis and cytokinesis. Required for normal formation of the cleavage furrow at the end of mitosis. Plays a role in endocytosis via clathrin-coated pits, but also clathrin-independent, actin-dependent fluid-phase endocytosis. Plays a role in macropinocytosis. Promotes internalization of TNFR. Promotes degradation of EGFR after EGF signaling. Stimulates the GTPase activity of DNM1. Promotes DNM1 oligomerization. Promotes activation of the Arp2/3 complex by WASL, and thereby plays a role in the reorganization of the F-actin cytoskeleton. Binds to membranes enriched in phosphatidylinositol 4,5-bisphosphate and promotes membrane tubulation. Has lower affinity for membranes enriched in phosphatidylinositol 3-phosphate. The chain is Sorting nexin-9 (Snx9) from Mus musculus (Mouse).